The chain runs to 366 residues: MSGNTLGLLFSVTTFGESHGPAIGAVIDGCPPGMALSAEDIQPDLDRRKPGTSRHVTQRKEEDLVEILSGVFEGKTTGTPICLLIRNTDQRSKDYGNIVETFRPGHADYTYWHKYGIRDPRGGGRSSARLTAPVVAAGAVAKKWLREKFGVEIHGYMSQLGEIRIPFLDWNEVPNNPFFAPNAEILPELETYMDALRRDGDSVGARIEVVATGMPVGWGEPLFDRLDADIAHAMMGLNAVKGVEIGAGFHAVSQRGSEHGDELTPAGFVGNNAGGILGGISTGQDISVSLAIKPTSSIRTPRRSIDKAGEPTAVETFGRHDPCVGIRATPIAEALLALVLTDHALRHRAQCGDVAVATPAIAAKAP.

NADP(+)-binding residues include Arg48 and Arg54. Residues 125-127, 238-239, Gly278, 293-297, and Arg319 each bind FMN; these read RSS, NA, and KPTSS.

Belongs to the chorismate synthase family. As to quaternary structure, homotetramer. The cofactor is FMNH2.

It catalyses the reaction 5-O-(1-carboxyvinyl)-3-phosphoshikimate = chorismate + phosphate. The protein operates within metabolic intermediate biosynthesis; chorismate biosynthesis; chorismate from D-erythrose 4-phosphate and phosphoenolpyruvate: step 7/7. In terms of biological role, catalyzes the anti-1,4-elimination of the C-3 phosphate and the C-6 proR hydrogen from 5-enolpyruvylshikimate-3-phosphate (EPSP) to yield chorismate, which is the branch point compound that serves as the starting substrate for the three terminal pathways of aromatic amino acid biosynthesis. This reaction introduces a second double bond into the aromatic ring system. This chain is Chorismate synthase, found in Ralstonia nicotianae (strain ATCC BAA-1114 / GMI1000) (Ralstonia solanacearum).